The following is a 941-amino-acid chain: Glycine dehydrogenase (decarboxylating) (941 aa).

At Lys-692 the chain carries N6-(pyridoxal phosphate)lysine.

Belongs to the GcvP family. The glycine cleavage system is composed of four proteins: P, T, L and H. It depends on pyridoxal 5'-phosphate as a cofactor.

It catalyses the reaction N(6)-[(R)-lipoyl]-L-lysyl-[glycine-cleavage complex H protein] + glycine + H(+) = N(6)-[(R)-S(8)-aminomethyldihydrolipoyl]-L-lysyl-[glycine-cleavage complex H protein] + CO2. In terms of biological role, the glycine cleavage system catalyzes the degradation of glycine. The P protein binds the alpha-amino group of glycine through its pyridoxal phosphate cofactor; CO(2) is released and the remaining methylamine moiety is then transferred to the lipoamide cofactor of the H protein. The polypeptide is Glycine dehydrogenase (decarboxylating) (Mycobacterium avium (strain 104)).